We begin with the raw amino-acid sequence, 244 residues long: Carboxy-S-adenosyl-L-methionine synthase (244 aa).

Residues Tyr-40, 65–67, 90–91, Asn-134, and Arg-201 each bind S-adenosyl-L-methionine; these read GCS and DN.

Belongs to the class I-like SAM-binding methyltransferase superfamily. Cx-SAM synthase family. As to quaternary structure, homodimer.

It carries out the reaction prephenate + S-adenosyl-L-methionine = carboxy-S-adenosyl-L-methionine + 3-phenylpyruvate + H2O. Catalyzes the conversion of S-adenosyl-L-methionine (SAM) to carboxy-S-adenosyl-L-methionine (Cx-SAM). The protein is Carboxy-S-adenosyl-L-methionine synthase of Citrifermentans bemidjiense (strain ATCC BAA-1014 / DSM 16622 / JCM 12645 / Bem) (Geobacter bemidjiensis).